A 466-amino-acid polypeptide reads, in one-letter code: 3-isopropylmalate dehydratase large subunit (466 aa).

Cys347, Cys407, and Cys410 together coordinate [4Fe-4S] cluster.

Belongs to the aconitase/IPM isomerase family. LeuC type 1 subfamily. In terms of assembly, heterodimer of LeuC and LeuD. [4Fe-4S] cluster is required as a cofactor.

The enzyme catalyses (2R,3S)-3-isopropylmalate = (2S)-2-isopropylmalate. It functions in the pathway amino-acid biosynthesis; L-leucine biosynthesis; L-leucine from 3-methyl-2-oxobutanoate: step 2/4. Catalyzes the isomerization between 2-isopropylmalate and 3-isopropylmalate, via the formation of 2-isopropylmaleate. The sequence is that of 3-isopropylmalate dehydratase large subunit from Escherichia coli O139:H28 (strain E24377A / ETEC).